Here is a 460-residue protein sequence, read N- to C-terminus: Proline--tRNA ligase (460 aa).

It belongs to the class-II aminoacyl-tRNA synthetase family. ProS type 3 subfamily. Homodimer.

It is found in the cytoplasm. The enzyme catalyses tRNA(Pro) + L-proline + ATP = L-prolyl-tRNA(Pro) + AMP + diphosphate. Catalyzes the attachment of proline to tRNA(Pro) in a two-step reaction: proline is first activated by ATP to form Pro-AMP and then transferred to the acceptor end of tRNA(Pro). The sequence is that of Proline--tRNA ligase from Methanococcus maripaludis (strain C5 / ATCC BAA-1333).